The chain runs to 160 residues: Large ribosomal subunit protein eL29 (160 aa).

Residues M1–S26 show a composition bias toward basic residues. The segment at M1–L32 is disordered. K5 is modified (N6-methyllysine). S31 carries the phosphoserine modification. K33 carries the N6-acetyllysine modification. The interval C119–Q160 is disordered. Low complexity predominate over residues P121 to A141.

It belongs to the eukaryotic ribosomal protein eL29 family. Component of the large ribosomal subunit.

It is found in the cytoplasm. Functionally, component of the large ribosomal subunit. The ribosome is a large ribonucleoprotein complex responsible for the synthesis of proteins in the cell. This is Large ribosomal subunit protein eL29 (RPL29) from Sus scrofa (Pig).